Consider the following 261-residue polypeptide: Tyrosine phosphatase-like protein H5 (261 aa).

Residues 26–261 (LIKKEHDKVL…ESVEQEYFVP (236 aa)) enclose the Tyrosine-protein phosphatase domain.

The protein belongs to the protein-tyrosine phosphatase family.

This Microplitis demolitor bracovirus (isolate Webb) (MdBV) protein is Tyrosine phosphatase-like protein H5 (H6).